The following is a 53-amino-acid chain: Sec-independent protein translocase protein TatA (53 aa).

The helical transmembrane segment at 1–21 (MGMSFSHLLIVLLIIFVLFGA) threads the bilayer.

The protein belongs to the TatA/E family. As to quaternary structure, the Tat system comprises two distinct complexes: a TatABC complex, containing multiple copies of TatA, TatB and TatC subunits, and a separate TatA complex, containing only TatA subunits. Substrates initially bind to the TatABC complex, which probably triggers association of the separate TatA complex to form the active translocon.

It localises to the cell inner membrane. Its function is as follows. Part of the twin-arginine translocation (Tat) system that transports large folded proteins containing a characteristic twin-arginine motif in their signal peptide across membranes. TatA could form the protein-conducting channel of the Tat system. This Rickettsia africae (strain ESF-5) protein is Sec-independent protein translocase protein TatA.